A 311-amino-acid polypeptide reads, in one-letter code: MTTRSPARPLIARRSTPAPTPAPHDPAPSRLSYRVTRLWLTPIFRKALHLGIPVFALFAAVTWYLGDETRVAELFEAVQEIRREVENRPEFRVNVLGIDGASDDVTEQVRAALALDLPISSFDLDLDELRGRLEALPPVRTADLRIQSGGYLAVRIDERIPAAVWLTHEGLSIVDGDGIFVAGFGTRELAAPLPLLGGEGANLAVPEALALMEASSILDDRVHGLVRMGERRWDVVLTNGSRILLPEIGAAAALDRVLALDDMGEILSRDVTAVDVRNPGRLTVRLTDAAMEELQRLQTLAAERPDGDTRG.

The segment at 1–28 (MTTRSPARPLIARRSTPAPTPAPHDPAP) is disordered. The Cytoplasmic segment spans residues 1 to 46 (MTTRSPARPLIARRSTPAPTPAPHDPAPSRLSYRVTRLWLTPIFRK). Residues 47–67 (ALHLGIPVFALFAAVTWYLGD) traverse the membrane as a helical segment. Over 68-311 (ETRVAELFEA…AERPDGDTRG (244 aa)) the chain is Periplasmic. A POTRA domain is found at 91 to 159 (FRVNVLGIDG…GYLAVRIDER (69 aa)).

The protein belongs to the FtsQ/DivIB family. FtsQ subfamily.

The protein localises to the cell inner membrane. In terms of biological role, essential cell division protein. This Jannaschia sp. (strain CCS1) protein is Cell division protein FtsQ.